The following is a 329-amino-acid chain: DNA-directed RNA polymerase subunit alpha (329 aa).

The alpha N-terminal domain (alpha-NTD) stretch occupies residues 1–235; that stretch reads MQGSVIEFLK…EQLDAFVDLR (235 aa). The alpha C-terminal domain (alpha-CTD) stretch occupies residues 249 to 329; that stretch reads FDPILLRPVD…NWPPASIAED (81 aa).

It belongs to the RNA polymerase alpha chain family. As to quaternary structure, homodimer. The RNAP catalytic core consists of 2 alpha, 1 beta, 1 beta' and 1 omega subunit. When a sigma factor is associated with the core the holoenzyme is formed, which can initiate transcription.

It catalyses the reaction RNA(n) + a ribonucleoside 5'-triphosphate = RNA(n+1) + diphosphate. In terms of biological role, DNA-dependent RNA polymerase catalyzes the transcription of DNA into RNA using the four ribonucleoside triphosphates as substrates. The polypeptide is DNA-directed RNA polymerase subunit alpha (Haemophilus ducreyi (strain 35000HP / ATCC 700724)).